A 555-amino-acid chain; its full sequence is Trehalase (555 aa).

Residues 1 to 16 (MIPFLLMVAFADTVLQ) form the signal peptide. A glycan (N-linked (GlcNAc...) asparagine) is linked at asparagine 46. Residues arginine 164, 171–172 (WD), and asparagine 208 each bind substrate. Asparagine 216 is a glycosylation site (N-linked (GlcNAc...) asparagine). Substrate contacts are provided by residues 217-219 (RSQ), 282-284 (RPE), and glycine 316. The Proton donor/acceptor role is filled by aspartate 318. Residues asparagine 334 and asparagine 371 are each glycosylated (N-linked (GlcNAc...) asparagine). Residue glutamate 516 is the Proton donor/acceptor of the active site. A substrate-binding site is contributed by glutamate 531.

This sequence belongs to the glycosyl hydrolase 37 family. In terms of tissue distribution, bean-shaped accessory glands (bags).

The protein resides in the secreted. It carries out the reaction alpha,alpha-trehalose + H2O = alpha-D-glucose + beta-D-glucose. The sequence is that of Trehalase from Tenebrio molitor (Yellow mealworm beetle).